The chain runs to 169 residues: Probable chorismate pyruvate-lyase (169 aa).

Substrate is bound by residues R71, I110, and E150.

The protein belongs to the UbiC family.

Its subcellular location is the cytoplasm. The enzyme catalyses chorismate = 4-hydroxybenzoate + pyruvate. It participates in cofactor biosynthesis; ubiquinone biosynthesis. In terms of biological role, removes the pyruvyl group from chorismate, with concomitant aromatization of the ring, to provide 4-hydroxybenzoate (4HB) for the ubiquinone pathway. This Acinetobacter baumannii (strain ATCC 17978 / DSM 105126 / CIP 53.77 / LMG 1025 / NCDC KC755 / 5377) protein is Probable chorismate pyruvate-lyase.